Here is a 666-residue protein sequence, read N- to C-terminus: Probable potassium transport system protein Kup (666 aa).

12 helical membrane passes run 16–36 (GFII…LYTM), 58–78 (ISLI…LVAL), 99–119 (TPWL…DGAL), 141–161 (IFQN…LLFA), 167–187 (TGVI…FLGI), 221–241 (IFIL…YSDL), 253–273 (WPFV…WILA), 292–312 (FTMH…QALI), 343–363 (TYIP…VLLF), 373–393 (YGLA…FFLI), 402–422 (VLLM…ASAV), and 424–444 (FMHG…IMTI).

The protein belongs to the HAK/KUP transporter (TC 2.A.72) family.

It is found in the cell membrane. The catalysed reaction is K(+)(in) + H(+)(in) = K(+)(out) + H(+)(out). Functionally, transport of potassium into the cell. Likely operates as a K(+):H(+) symporter. The sequence is that of Probable potassium transport system protein Kup from Streptococcus agalactiae serotype Ia (strain ATCC 27591 / A909 / CDC SS700).